The sequence spans 230 residues: MEPSTNKPDCKKIFDSIASKYDRTNTILSLGMHHFWNRSLIQILGSGYSLLDLCAGTGKVAKRYIAAHPQASVTLVDFSSAMLDIAKQHLPQGSCSFIHSDINQLPLENHSYPLAAMAYGLRNLSDPHKALQEISRVLMPSGKLGILELTPPKKTHPTYSAHKLYLRAVVPWIGKSVSKDPDAYSYLSKSIQQLPKDHDLEDLFSKSGFYIAKKKKLFLGAATIWLLEKQ.

Residues threonine 57, aspartate 77, and 101 to 102 contribute to the S-adenosyl-L-methionine site; that span reads DI.

It belongs to the class I-like SAM-binding methyltransferase superfamily. MenG/UbiE family.

It catalyses the reaction a 2-demethylmenaquinol + S-adenosyl-L-methionine = a menaquinol + S-adenosyl-L-homocysteine + H(+). It participates in quinol/quinone metabolism; menaquinone biosynthesis; menaquinol from 1,4-dihydroxy-2-naphthoate: step 2/2. In terms of biological role, methyltransferase required for the conversion of demethylmenaquinol (DMKH2) to menaquinol (MKH2). This Chlamydia pneumoniae (Chlamydophila pneumoniae) protein is Demethylmenaquinone methyltransferase.